A 97-amino-acid polypeptide reads, in one-letter code: Protein C4 (97 aa).

Disordered stretches follow at residues 1-31 (MGLL…PHTG) and 75-97 (ANLP…PSIY). Residue Gly-2 is the site of N-myristoyl glycine; by host attachment. The span at 77-88 (LPTTHMPRQSIQ) shows a compositional bias: polar residues.

The protein belongs to the geminiviridae protein AC4/C4 family.

Its subcellular location is the host cell membrane. In terms of biological role, pathogenicity determinant. May act as a suppressor of RNA-mediated gene silencing, also known as post-transcriptional gene silencing (PTGS), a mechanism of plant viral defense that limits the accumulation of viral RNAs. In Tomato yellow leaf curl China virus (TYLCCNV), this protein is Protein C4.